We begin with the raw amino-acid sequence, 246 residues long: Pyridoxine 5'-phosphate synthase (246 aa).

Residue Asn7 participates in 3-amino-2-oxopropyl phosphate binding. 9–10 (DH) contacts 1-deoxy-D-xylulose 5-phosphate. Arg18 lines the 3-amino-2-oxopropyl phosphate pocket. The Proton acceptor role is filled by His43. 1-deoxy-D-xylulose 5-phosphate contacts are provided by Arg45 and His50. Glu70 (proton acceptor) is an active-site residue. Thr100 lines the 1-deoxy-D-xylulose 5-phosphate pocket. His190 acts as the Proton donor in catalysis. Residues Gly191 and 212-213 (GH) contribute to the 3-amino-2-oxopropyl phosphate site.

It belongs to the PNP synthase family. In terms of assembly, homooctamer; tetramer of dimers.

It localises to the cytoplasm. It catalyses the reaction 3-amino-2-oxopropyl phosphate + 1-deoxy-D-xylulose 5-phosphate = pyridoxine 5'-phosphate + phosphate + 2 H2O + H(+). It functions in the pathway cofactor biosynthesis; pyridoxine 5'-phosphate biosynthesis; pyridoxine 5'-phosphate from D-erythrose 4-phosphate: step 5/5. Catalyzes the complicated ring closure reaction between the two acyclic compounds 1-deoxy-D-xylulose-5-phosphate (DXP) and 3-amino-2-oxopropyl phosphate (1-amino-acetone-3-phosphate or AAP) to form pyridoxine 5'-phosphate (PNP) and inorganic phosphate. This chain is Pyridoxine 5'-phosphate synthase, found in Prochlorococcus marinus (strain SARG / CCMP1375 / SS120).